The primary structure comprises 204 residues: LexA repressor (204 aa).

Residues 28–48 (VREIGEAVGLASSSTVHGHLD) constitute a DNA-binding region (H-T-H motif). Active-site for autocatalytic cleavage activity residues include S126 and K164.

It belongs to the peptidase S24 family. In terms of assembly, homodimer.

The enzyme catalyses Hydrolysis of Ala-|-Gly bond in repressor LexA.. In terms of biological role, represses a number of genes involved in the response to DNA damage (SOS response), including recA and lexA. In the presence of single-stranded DNA, RecA interacts with LexA causing an autocatalytic cleavage which disrupts the DNA-binding part of LexA, leading to derepression of the SOS regulon and eventually DNA repair. The polypeptide is LexA repressor (Exiguobacterium sibiricum (strain DSM 17290 / CCUG 55495 / CIP 109462 / JCM 13490 / 255-15)).